The following is a 135-amino-acid chain: Protein Wnt-7b (135 aa).

2 cysteine pairs are disulfide-bonded: cysteine 3-cysteine 17 and cysteine 5-cysteine 12. Serine 9 carries O-palmitoleoyl serine; by PORCN lipidation. Residues 41–69 (VEVVRANRLRQPTFLKIKKVRSYQKPMET) are disordered linker. Disulfide bonds link cysteine 81-cysteine 112, cysteine 97-cysteine 107, and cysteine 134-cysteine 135. N-linked (GlcNAc...) asparagine glycosylation occurs at asparagine 98.

It belongs to the Wnt family. In terms of processing, palmitoleoylation is required for efficient binding to frizzled receptors. Depalmitoleoylation leads to Wnt signaling pathway inhibition. In adults, in brain and lung.

It is found in the secreted. The protein localises to the extracellular space. The protein resides in the extracellular matrix. Its function is as follows. Ligand for members of the frizzled family of seven transmembrane receptors that functions in the canonical Wnt/beta-catenin signaling pathway. Required for normal fusion of the chorion and the allantois during placenta development. Required for central nervous system (CNS) angiogenesis and blood-brain barrier regulation. This Xenopus laevis (African clawed frog) protein is Protein Wnt-7b (wnt7b).